The following is a 97-amino-acid chain: MAIGFIGSSPDAELSSENSRISSSVLLGCLLCCTDWSAVVPGKTETFRKPFVAIMIKKLKSCFAAYLSDLEQGSMCDMANASPTSLELGLSKLDKES.

Cystine bridges form between C32/C62 and C33/C76.

The protein belongs to the intercrine beta (chemokine CC) family. Highly divergent.

The chain is Putative CC-type chemokine U83 (U83) from Homo sapiens (Human).